A 33-amino-acid chain; its full sequence is Mu/delta-theraphotoxin-Pm2a (33 aa).

3 disulfide bridges follow: C2/C16, C9/C21, and C15/C27. F33 bears the Phenylalanine amide mark.

In terms of tissue distribution, expressed by the venom gland.

Its subcellular location is the secreted. In terms of biological role, gating-modifier toxin with very weak activity on Nav1.7/SCN9A and Nav1.8/SCN10A. Shows 22% peak current inhibition (at 10 uM) on Nav1.8/SCN10A sodium channels. Show peak current inhibition and delays fast inactivation on Nav1.7/SCN9A (EC(50)&gt;10 uM). The chain is Mu/delta-theraphotoxin-Pm2a from Poecilotheria metallica (Metallic blue ornamental tree spider).